A 127-amino-acid polypeptide reads, in one-letter code: Fluoride-specific ion channel FluC (127 aa).

4 helical membrane passes run 4–24, 38–58, 71–91, and 104–124; these read LSVL…RYLI, YGTL…IAAF, IIGL…MDNV, and LNVL…FQLL. Residues G78 and T81 each coordinate Na(+).

It belongs to the fluoride channel Fluc/FEX (TC 1.A.43) family.

It is found in the cell inner membrane. The enzyme catalyses fluoride(in) = fluoride(out). Its activity is regulated as follows. Na(+) is not transported, but it plays an essential structural role and its presence is essential for fluoride channel function. Its function is as follows. Fluoride-specific ion channel. Important for reducing fluoride concentration in the cell, thus reducing its toxicity. The sequence is that of Fluoride-specific ion channel FluC from Vibrio campbellii (strain ATCC BAA-1116).